The sequence spans 339 residues: MIELFYEYMFPLTVIALKVVAITIPLILCVAYLTYAERRVIGLMQLRRGPNVVGPFGLLQPIADAVKLLFKEPIIPTNADKILFILAPIITFVLSLIGWAVIPFAKGVVLADINVGVLYILAISSLSVYGIIIAGWASNSKYAFLGAIRSSAQMISYEVSIGLVIVTVLLTTGTLNLSRIIEAQKTLPWWIDLMLLPMSIVFFISVLAETNRLPFDLPEAESELVAGYNVEYSSMGFALFFLGEYANMILVSAMTTTFFLGGYLPPFNLPFLDCIPGFFWFVLKVMLLLFCFLWIRATLPRYRYDQLMRLGWKVFLPLTLFGVVLVSSVLFYTDNLPSV.

The next 9 membrane-spanning stretches (helical) occupy residues 10–30, 50–70, 82–102, 115–135, 155–175, 187–207, 235–255, 275–295, and 311–331; these read FPLT…ILCV, PNVV…KLLF, ILFI…WAVI, VGVL…IIAG, ISYE…TGTL, LPWW…ISVL, MGFA…SAMT, IPGF…FLWI, and GWKV…SVLF.

It belongs to the complex I subunit 1 family. As to quaternary structure, NDH-1 is composed of 14 different subunits. Subunits NuoA, H, J, K, L, M, N constitute the membrane sector of the complex.

It localises to the cell inner membrane. The catalysed reaction is a quinone + NADH + 5 H(+)(in) = a quinol + NAD(+) + 4 H(+)(out). NDH-1 shuttles electrons from NADH, via FMN and iron-sulfur (Fe-S) centers, to quinones in the respiratory chain. The immediate electron acceptor for the enzyme in this species is believed to be ubiquinone. Couples the redox reaction to proton translocation (for every two electrons transferred, four hydrogen ions are translocated across the cytoplasmic membrane), and thus conserves the redox energy in a proton gradient. This subunit may bind ubiquinone. The chain is NADH-quinone oxidoreductase subunit H from Rickettsia typhi (strain ATCC VR-144 / Wilmington).